The following is a 301-amino-acid chain: Pyridoxal 5'-phosphate synthase subunit PdxS (301 aa).

D31 is a binding site for D-ribose 5-phosphate. K88 acts as the Schiff-base intermediate with D-ribose 5-phosphate in catalysis. G160 lines the D-ribose 5-phosphate pocket. K172 is a binding site for D-glyceraldehyde 3-phosphate. Residues G221 and 242–243 (GS) each bind D-ribose 5-phosphate.

This sequence belongs to the PdxS/SNZ family. As to quaternary structure, in the presence of PdxT, forms a dodecamer of heterodimers.

It catalyses the reaction aldehydo-D-ribose 5-phosphate + D-glyceraldehyde 3-phosphate + L-glutamine = pyridoxal 5'-phosphate + L-glutamate + phosphate + 3 H2O + H(+). It functions in the pathway cofactor biosynthesis; pyridoxal 5'-phosphate biosynthesis. Catalyzes the formation of pyridoxal 5'-phosphate from ribose 5-phosphate (RBP), glyceraldehyde 3-phosphate (G3P) and ammonia. The ammonia is provided by the PdxT subunit. Can also use ribulose 5-phosphate and dihydroxyacetone phosphate as substrates, resulting from enzyme-catalyzed isomerization of RBP and G3P, respectively. The protein is Pyridoxal 5'-phosphate synthase subunit PdxS of Methanosarcina mazei (strain ATCC BAA-159 / DSM 3647 / Goe1 / Go1 / JCM 11833 / OCM 88) (Methanosarcina frisia).